Here is a 548-residue protein sequence, read N- to C-terminus: Telomerase Cajal body protein 1 (548 aa).

Positions 1–142 (MKTLETQPLA…SGEPAAEDEG (142 aa)) are disordered. Over residues 15–31 (PSDQDPAPAHPSPHASP) the composition is skewed to low complexity. A phosphoserine mark is found at Ser-26, Ser-30, and Ser-54. A Phosphoserine; by ATM modification is found at Ser-64. A phosphoserine mark is found at Ser-85, Ser-90, Ser-112, and Ser-114. WD repeat units lie at residues 167–206 (QPEN…YHEG), 222–267 (EGDT…LRAS), 272–313 (NHLD…RDCE), 323–364 (GQSG…ALLG), 365–405 (GHQG…YPLW), and 411–450 (VTTN…NDGK). At Thr-489 the chain carries Phosphothreonine. Ser-491 carries the post-translational modification Phosphoserine. The interval 526-548 (SIPDDHQGEKGQGGTEGGVGELI) is disordered. Over residues 535 to 548 (KGQGGTEGGVGELI) the composition is skewed to gly residues.

The protein belongs to the TCAB1 family. In terms of assembly, component of the telomerase holoenzyme complex composed of one molecule of TERT, one molecule of WRAP53/TCAB1, two molecules of H/ACA ribonucleoprotein complex subunits DKC1, NOP10, NHP2 and GAR1, and a telomerase RNA template component (TERC). The telomerase holoenzyme complex is associated with TEP1, SMG6/EST1A and POT1. Interacts with the chaperonin-containing T-complex (TRiC) complex; which mediates the folding of WRAP53/TCAB1. Interacts with COIL. Interacts with SMN1. Interacts with RNF8. Interacts with histone H2AX. Post-translationally, phosphorylated at Ser-64 by ATM in response to DNA damage, promoting its interaction with histone H2AX and localization to sites of DNA double-strand breaks. In terms of tissue distribution, expressed in all tissues and cell lines examined.

Its subcellular location is the nucleus. The protein localises to the cajal body. The protein resides in the chromosome. It localises to the telomere. Functionally, RNA chaperone that plays a key role in telomere maintenance and RNA localization to Cajal bodies. Specifically recognizes and binds the Cajal body box (CAB box) present in both small Cajal body RNAs (scaRNAs) and telomerase RNA template component (TERC). Essential component of the telomerase holoenzyme complex, a ribonucleoprotein complex essential for the replication of chromosome termini that elongates telomeres in most eukaryotes. In the telomerase holoenzyme complex, required to stimulate the catalytic activity of the complex. Acts by specifically binding the CAB box of the TERC RNA and controlling the folding of the CR4/CR5 region of the TERC RNA, a critical step for telomerase activity. In addition, also controls telomerase holoenzyme complex localization to Cajal body. During S phase, required for delivery of TERC to telomeres during S phase and for telomerase activity. In addition to its role in telomere maintenance, also required for Cajal body formation, probably by mediating localization of scaRNAs to Cajal bodies. Also plays a role in DNA repair: phosphorylated by ATM in response to DNA damage and relocalizes to sites of DNA double-strand breaks to promote the repair of DNA double-strand breaks. Acts by recruiting the ubiquitin ligase RNF8 to DNA breaks and promote both homologous recombination (HR) and non-homologous end joining (NHEJ). In Homo sapiens (Human), this protein is Telomerase Cajal body protein 1.